The primary structure comprises 516 residues: MGSGQWHMEKRSTLKNDSFVKEYNPVTETGSLSIIVLGASGDLAKKKTFPALFNLFHQGFLNPDEVHIFGYARSKITDEELRDKIRGYLVDEKNASKKTEALSKFLKLIKYVSGPYDSEEGFKRLDKAILEHEISKKTAEGSSRRLFYLALPPSVYPPVSKMIKAWCTNKSDLGGWTRIVVEKPFGKDLESAEQLSSQIGALFEEPQIYRIDHYLGKELVQNMLVLRFANRLFLPLWNRDNIANVQIVFREDFGTEGRGGYFDEYGIIRDIIQNHLLQVLCLVAMEKPISLKPEHIRDEKVKVLQSVIPIKDEEVVLGQYEGYRDDPTVPNDSNTPTFATTILRINNERWEGVPFILKAGKAMSSKKADIRIQFKDVPGDIFKCQNQGRNEFVIRLQPSEAMYMKLTVKQPGLEMQTVQSELDLSYKQRYQDVSIPEAYERLILDTIRGDQQHFVRRDELKAAWEIFTPLLHRIDKGEVKSVPYKQGSRGPAEADQLLKKAGYMQTHGYIWIPPTL.

Residues 38 to 45, Arg73, Tyr156, and Lys183 each bind NADP(+); that span reads GASGDLAK. D-glucose 6-phosphate is bound by residues Lys183, 213–217, Glu251, and Asp270; that span reads HYLGK. His275 (proton acceptor) is an active-site residue. Lys358 contacts NADP(+). The D-glucose 6-phosphate site is built by Lys361 and Lys366. Residues Lys367, Arg371, and Arg395 each coordinate NADP(+). Gln397 is a binding site for D-glucose 6-phosphate. NADP(+) contacts are provided by residues 403 to 405, 423 to 425, Arg489, and Trp511; these read YMK and DLS.

This sequence belongs to the glucose-6-phosphate dehydrogenase family. In terms of assembly, forms homodimer. Expressed in leaves and stems.

It is found in the cytoplasm. The protein resides in the cytosol. The catalysed reaction is D-glucose 6-phosphate + NADP(+) = 6-phospho-D-glucono-1,5-lactone + NADPH + H(+). It functions in the pathway carbohydrate degradation; pentose phosphate pathway; D-ribulose 5-phosphate from D-glucose 6-phosphate (oxidative stage): step 1/3. Its activity is regulated as follows. Regulated by metabolites. In terms of biological role, catalyzes the rate-limiting step of the oxidative pentose-phosphate pathway, which represents a route for the dissimilation of carbohydrates besides glycolysis. The main function of this enzyme is to provide reducing power (NADPH) and pentose phosphates for fatty acid and nucleic acid synthesis which are involved in membrane synthesis and cell division. This Arabidopsis thaliana (Mouse-ear cress) protein is Glucose-6-phosphate 1-dehydrogenase 5, cytoplasmic.